The sequence spans 220 residues: Deoxyribose-phosphate aldolase (220 aa).

The Proton donor/acceptor role is filled by Asp89. Catalysis depends on Lys151, which acts as the Schiff-base intermediate with acetaldehyde. Lys180 acts as the Proton donor/acceptor in catalysis.

The protein belongs to the DeoC/FbaB aldolase family. DeoC type 1 subfamily.

The protein localises to the cytoplasm. The catalysed reaction is 2-deoxy-D-ribose 5-phosphate = D-glyceraldehyde 3-phosphate + acetaldehyde. It participates in carbohydrate degradation; 2-deoxy-D-ribose 1-phosphate degradation; D-glyceraldehyde 3-phosphate and acetaldehyde from 2-deoxy-alpha-D-ribose 1-phosphate: step 2/2. Its function is as follows. Catalyzes a reversible aldol reaction between acetaldehyde and D-glyceraldehyde 3-phosphate to generate 2-deoxy-D-ribose 5-phosphate. In Streptococcus pneumoniae serotype 4 (strain ATCC BAA-334 / TIGR4), this protein is Deoxyribose-phosphate aldolase.